Reading from the N-terminus, the 273-residue chain is HMP-PP phosphatase (273 aa).

Asp-8 functions as the Nucleophile in the catalytic mechanism. Residues Asp-8, Asp-10, and Asp-212 each coordinate Mg(2+).

The protein belongs to the HAD-like hydrolase superfamily. Cof family. Mg(2+) is required as a cofactor.

It catalyses the reaction 4-amino-2-methyl-5-(diphosphooxymethyl)pyrimidine + H2O = 4-amino-2-methyl-5-(phosphooxymethyl)pyrimidine + phosphate + H(+). Functionally, catalyzes the hydrolysis of 4-amino-2-methyl-5-hydroxymethylpyrimidine pyrophosphate (HMP-PP) to 4-amino-2-methyl-5-hydroxymethylpyrimidine phosphate (HMP-P). The protein is HMP-PP phosphatase of Yersinia enterocolitica serotype O:8 / biotype 1B (strain NCTC 13174 / 8081).